Reading from the N-terminus, the 198-residue chain is Ribonuclease HII (198 aa).

The RNase H type-2 domain occupies Asn-11–Val-198. 3 residues coordinate a divalent metal cation: Asp-17, Glu-18, and Asp-109.

Belongs to the RNase HII family. The cofactor is Mn(2+). It depends on Mg(2+) as a cofactor.

It localises to the cytoplasm. It catalyses the reaction Endonucleolytic cleavage to 5'-phosphomonoester.. Functionally, endonuclease that specifically degrades the RNA of RNA-DNA hybrids. In Yersinia enterocolitica serotype O:8 / biotype 1B (strain NCTC 13174 / 8081), this protein is Ribonuclease HII.